A 382-amino-acid polypeptide reads, in one-letter code: Small ribosomal subunit protein mS35 (382 aa).

The segment covering glycine 363–glycine 375 has biased composition (gly residues). The tract at residues glycine 363–arginine 382 is disordered.

This sequence belongs to the mitochondrion-specific ribosomal protein mS35 family. In terms of assembly, component of the mitochondrial small ribosomal subunit (mt-SSU). Mature N.crassa 74S mitochondrial ribosomes consist of a small (37S) and a large (54S) subunit. The 37S small subunit contains a 16S ribosomal RNA (16S mt-rRNA) and 32 different proteins. The 54S large subunit contains a 23S rRNA (23S mt-rRNA) and 42 different proteins.

It localises to the mitochondrion. Component of the mitochondrial ribosome (mitoribosome), a dedicated translation machinery responsible for the synthesis of mitochondrial genome-encoded proteins, including at least some of the essential transmembrane subunits of the mitochondrial respiratory chain. The mitoribosomes are attached to the mitochondrial inner membrane and translation products are cotranslationally integrated into the membrane. This is Small ribosomal subunit protein mS35 (rsm24) from Neurospora crassa (strain ATCC 24698 / 74-OR23-1A / CBS 708.71 / DSM 1257 / FGSC 987).